A 349-amino-acid polypeptide reads, in one-letter code: Isopentenyl-diphosphate delta-isomerase (349 aa).

6–7 (RK) serves as a coordination point for substrate. FMN-binding positions include 62–64 (AMT), Ser-93, and Asn-122. Gln-152 lines the substrate pocket. Residue Glu-153 coordinates Mg(2+). FMN is bound by residues Lys-184, Thr-214, 258-259 (GG), and 280-281 (AG).

This sequence belongs to the IPP isomerase type 2 family. Homooctamer. Dimer of tetramers. FMN is required as a cofactor. NADPH serves as cofactor. The cofactor is Mg(2+).

It localises to the cytoplasm. The catalysed reaction is isopentenyl diphosphate = dimethylallyl diphosphate. In terms of biological role, involved in the biosynthesis of isoprenoids. Catalyzes the 1,3-allylic rearrangement of the homoallylic substrate isopentenyl (IPP) to its allylic isomer, dimethylallyl diphosphate (DMAPP). The sequence is that of Isopentenyl-diphosphate delta-isomerase from Bacillus cereus (strain AH187).